Here is a 968-residue protein sequence, read N- to C-terminus: RNA polymerase-associated protein RapA (968 aa).

In terms of domain architecture, Helicase ATP-binding spans 164–334 (DVGRRHAPRV…FARLRLLDPN (171 aa)). 177-184 (DEVGLGKT) is an ATP binding site. The short motif at 280–283 (DEAH) is the DEAH box element. Positions 490-662 (RVEWLMGYLT…YLASPDETEG (173 aa)) constitute a Helicase C-terminal domain.

This sequence belongs to the SNF2/RAD54 helicase family. RapA subfamily. In terms of assembly, interacts with the RNAP. Has a higher affinity for the core RNAP than for the holoenzyme. Its ATPase activity is stimulated by binding to RNAP.

Transcription regulator that activates transcription by stimulating RNA polymerase (RNAP) recycling in case of stress conditions such as supercoiled DNA or high salt concentrations. Probably acts by releasing the RNAP, when it is trapped or immobilized on tightly supercoiled DNA. Does not activate transcription on linear DNA. Probably not involved in DNA repair. The sequence is that of RNA polymerase-associated protein RapA from Escherichia coli O127:H6 (strain E2348/69 / EPEC).